Here is a 215-residue protein sequence, read N- to C-terminus: uncharacterized protein (215 aa).

Positions Leu-25–Gln-48 are disordered. The segment covering Ser-27 to Ala-47 has biased composition (low complexity).

This is an uncharacterized protein from Homo sapiens (Human).